The following is a 363-amino-acid chain: S-adenosylmethionine:tRNA ribosyltransferase-isomerase (363 aa).

This sequence belongs to the QueA family. In terms of assembly, monomer.

The protein localises to the cytoplasm. It carries out the reaction 7-aminomethyl-7-carbaguanosine(34) in tRNA + S-adenosyl-L-methionine = epoxyqueuosine(34) in tRNA + adenine + L-methionine + 2 H(+). The protein operates within tRNA modification; tRNA-queuosine biosynthesis. Its function is as follows. Transfers and isomerizes the ribose moiety from AdoMet to the 7-aminomethyl group of 7-deazaguanine (preQ1-tRNA) to give epoxyqueuosine (oQ-tRNA). The protein is S-adenosylmethionine:tRNA ribosyltransferase-isomerase of Synechococcus sp. (strain RCC307).